The primary structure comprises 92 residues: Small ribosomal subunit protein uS19 (92 aa).

This sequence belongs to the universal ribosomal protein uS19 family.

In terms of biological role, protein S19 forms a complex with S13 that binds strongly to the 16S ribosomal RNA. The sequence is that of Small ribosomal subunit protein uS19 from Methylobacterium radiotolerans (strain ATCC 27329 / DSM 1819 / JCM 2831 / NBRC 15690 / NCIMB 10815 / 0-1).